The following is a 536-amino-acid chain: Lysosomal acid glucosylceramidase (536 aa).

The signal sequence occupies residues Met-1–Gly-39. Cystine bridges form between Cys-43-Cys-55 and Cys-57-Cys-62. Asn-58, Asn-98, and Asn-185 each carry an N-linked (GlcNAc...) asparagine glycan. Glu-274 serves as the catalytic Proton donor. N-linked (GlcNAc...) asparagine glycosylation occurs at Asn-309. Catalysis depends on Glu-379, which acts as the Nucleophile. Residue Asn-501 is glycosylated (N-linked (GlcNAc...) asparagine).

Belongs to the glycosyl hydrolase 30 family. Interacts with saposin-C. Interacts with SCARB2. Interacts with TCP1. Interacts with GRN; this interaction prevents aggregation of GBA1-SCARB2 complex via interaction with HSPA1A upon stress.

It localises to the lysosome membrane. It carries out the reaction a beta-D-glucosyl-(1&lt;-&gt;1')-N-acylsphing-4-enine + H2O = an N-acylsphing-4-enine + D-glucose. The enzyme catalyses a beta-D-galactosyl-(1&lt;-&gt;1')-N-acylsphing-4-enine + H2O = an N-acylsphing-4-enine + D-galactose. The catalysed reaction is cholesteryl 3-beta-D-glucoside + H2O = cholesterol + D-glucose. It catalyses the reaction a beta-D-glucosyl-(1&lt;-&gt;1')-N-acylsphing-4-enine + cholesterol = cholesteryl 3-beta-D-glucoside + an N-acylsphing-4-enine. It carries out the reaction beta-D-glucosyl-N-(9Z-octadecenoyl)-sphing-4E-enine + cholesterol = N-(9Z-octadecenoyl)-sphing-4-enine + cholesteryl 3-beta-D-glucoside. The enzyme catalyses beta-D-glucosyl-N-octanoylsphing-4E-enine + cholesterol = N-octanoylsphing-4-enine + cholesteryl 3-beta-D-glucoside. The catalysed reaction is beta-D-glucosyl-N-dodecanoylsphing-4-enine + cholesterol = N-dodecanoylsphing-4-enine + cholesteryl 3-beta-D-glucoside. It catalyses the reaction beta-D-glucosyl-(1&lt;-&gt;1)-N-octadecanoylsphing-4-enine + cholesterol = N-octadecanoylsphing-4-enine + cholesteryl 3-beta-D-glucoside. It carries out the reaction beta-D-glucosyl-(1&lt;-&gt;1')-N-(15Z-tetracosenoyl)-sphing-4-enine + cholesterol = N-(15Z-tetracosenoyl)-sphing-4-enine + cholesteryl 3-beta-D-glucoside. The enzyme catalyses a beta-D-galactosyl-(1&lt;-&gt;1')-N-acylsphing-4-enine + cholesterol = cholesteryl 3-beta-D-galactoside + an N-acylsphing-4-enine. The catalysed reaction is 1-(beta-D-galactosyl)-N-dodecanoylsphing-4-enine + cholesterol = cholesteryl 3-beta-D-galactoside + N-dodecanoylsphing-4-enine. It catalyses the reaction a beta-D-xylosyl-(1&lt;-&gt;1')-N-acylsphing-4-enine + cholesterol = cholesteryl 3-beta-D-xyloside + an N-acylsphing-4-enine. It carries out the reaction beta-D-xylosyl-(1&lt;-&gt;1')-N-(9Z-octadecenoyl)-sphing-4-enine + cholesterol = cholesteryl 3-beta-D-xyloside + N-(9Z-octadecenoyl)-sphing-4-enine. Its pathway is steroid metabolism; cholesterol metabolism. It functions in the pathway sphingolipid metabolism. Functionally, glucosylceramidase that catalyzes, within the lysosomal compartment, the hydrolysis of glucosylceramides/GlcCers (such as beta-D-glucosyl-(1&lt;-&gt;1')-N-acylsphing-4-enine) into free ceramides (such as N-acylsphing-4-enine) and glucose. Plays a central role in the degradation of complex lipids and the turnover of cellular membranes. Through the production of ceramides, participates in the PKC-activated salvage pathway of ceramide formation. Catalyzes the glucosylation of cholesterol, through a transglucosylation reaction where glucose is transferred from GlcCer to cholesterol. GlcCer containing mono-unsaturated fatty acids (such as beta-D-glucosyl-N-(9Z-octadecenoyl)-sphing-4-enine) are preferred as glucose donors for cholesterol glucosylation when compared with GlcCer containing same chain length of saturated fatty acids (such as beta-D-glucosyl-N-octadecanoyl-sphing-4-enine). Under specific conditions, may alternatively catalyze the reverse reaction, transferring glucose from cholesteryl 3-beta-D-glucoside to ceramide. Can also hydrolyze cholesteryl 3-beta-D-glucoside producing glucose and cholesterol. Catalyzes the hydrolysis of galactosylceramides/GalCers (such as beta-D-galactosyl-(1&lt;-&gt;1')-N-acylsphing-4-enine), as well as the transfer of galactose between GalCers and cholesterol in vitro, but with lower activity than with GlcCers. Contrary to GlcCer and GalCer, xylosylceramide/XylCer (such as beta-D-xyosyl-(1&lt;-&gt;1')-N-acylsphing-4-enine) is not a good substrate for hydrolysis, however it is a good xylose donor for transxylosylation activity to form cholesteryl 3-beta-D-xyloside. The protein is Lysosomal acid glucosylceramidase (GBA1) of Pan troglodytes (Chimpanzee).